The chain runs to 170 residues: Inosine/xanthosine triphosphatase (170 aa).

This sequence belongs to the YjjX NTPase family. In terms of assembly, homodimer. Requires Mg(2+) as cofactor. It depends on Mn(2+) as a cofactor.

It catalyses the reaction XTP + H2O = XDP + phosphate + H(+). It carries out the reaction ITP + H2O = IDP + phosphate + H(+). Phosphatase that hydrolyzes non-canonical purine nucleotides such as XTP and ITP to their respective diphosphate derivatives. Probably excludes non-canonical purines from DNA/RNA precursor pool, thus preventing their incorporation into DNA/RNA and avoiding chromosomal lesions. This Aliivibrio fischeri (strain MJ11) (Vibrio fischeri) protein is Inosine/xanthosine triphosphatase.